The primary structure comprises 236 residues: V-set and transmembrane domain-containing protein 1 (236 aa).

An N-terminal signal peptide occupies residues Met-1 to Gly-16. The Extracellular portion of the chain corresponds to Tyr-17–Thr-135. The Ig-like V-type domain occupies Pro-27–Gln-114. N-linked (GlcNAc...) asparagine glycosylation is found at Asn-44 and Asn-55. Cys-49 and Cys-96 are disulfide-bonded. Residues Ile-136–Ile-156 traverse the membrane as a helical segment. The Cytoplasmic segment spans residues Tyr-157–Val-236. The disordered stretch occupies residues Ser-166 to Asp-200. 2 consecutive short sequence motifs (ITIM motif) follow at residues Val-204–Leu-209 and His-229–Leu-234. Positions Ser-215–Val-236 are disordered.

Post-translationally, isoform 2 is N-glycosylated. In terms of tissue distribution, expressed on myeloid (neutrophils, eosinophils and monocytes) but not on lymphoid cells.

The protein localises to the membrane. It is found in the secreted. Behaves as a cytokine, promoting IL17A secretion by CD4+ T-cells, and differentiation and activation of IL17 producing helper T-cells (TH17). Functionally, inhibitory immune receptor involved in the regulation of phagocytes. The protein is V-set and transmembrane domain-containing protein 1 (VSTM1) of Homo sapiens (Human).